Here is a 205-residue protein sequence, read N- to C-terminus: Small ribosomal subunit protein uS4 (205 aa).

The segment at 18-49 (NIWGRPKSPVNKREYGPGQHGQRRKGKLSDFG) is disordered. The S4 RNA-binding domain occupies 94–157 (RRLDAIVYRA…KQLALVLEAN (64 aa)).

Belongs to the universal ribosomal protein uS4 family. In terms of assembly, part of the 30S ribosomal subunit. Contacts protein S5. The interaction surface between S4 and S5 is involved in control of translational fidelity.

One of the primary rRNA binding proteins, it binds directly to 16S rRNA where it nucleates assembly of the body of the 30S subunit. Its function is as follows. With S5 and S12 plays an important role in translational accuracy. In Afipia carboxidovorans (strain ATCC 49405 / DSM 1227 / KCTC 32145 / OM5) (Oligotropha carboxidovorans), this protein is Small ribosomal subunit protein uS4.